The sequence spans 172 residues: Large ribosomal subunit protein uL10 (172 aa).

It belongs to the universal ribosomal protein uL10 family. In terms of assembly, part of the ribosomal stalk of the 50S ribosomal subunit. The N-terminus interacts with L11 and the large rRNA to form the base of the stalk. The C-terminus forms an elongated spine to which L12 dimers bind in a sequential fashion forming a multimeric L10(L12)X complex.

Forms part of the ribosomal stalk, playing a central role in the interaction of the ribosome with GTP-bound translation factors. This is Large ribosomal subunit protein uL10 from Francisella philomiragia subsp. philomiragia (strain ATCC 25017 / CCUG 19701 / FSC 153 / O#319-036).